The primary structure comprises 505 residues: Nicotinamide phosphoribosyltransferase (505 aa).

Arg196 is a binding site for diphosphate. Asp219 provides a ligand contact to beta-nicotinamide D-ribonucleotide. His246 and Arg314 together coordinate diphosphate. Residues 314–316, 369–370, and Arg408 each bind beta-nicotinamide D-ribonucleotide; these read RPD and GD.

Belongs to the NAPRTase family.

The enzyme catalyses beta-nicotinamide D-ribonucleotide + diphosphate = 5-phospho-alpha-D-ribose 1-diphosphate + nicotinamide + H(+). The protein operates within cofactor biosynthesis; NAD(+) biosynthesis; nicotinamide D-ribonucleotide from 5-phospho-alpha-D-ribose 1-diphosphate and nicotinamide: step 1/1. Its activity is regulated as follows. 10-fold more active in the presence of saturating ATP. Catalyzes the condensation of nicotinamide with 5-phosphoribosyl-1-pyrophosphate to yield nicotinamide mononucleotide, an intermediate in the biosynthesis of NAD. Functions in the nondeamidating salvage pathway for production of NAD from nicotinamide. Displays a strict preference for nicotinamide over nicotinate substrate. The chain is Nicotinamide phosphoribosyltransferase from Acinetobacter baylyi (strain ATCC 33305 / BD413 / ADP1).